The following is a 314-amino-acid chain: Basic leucine zipper 63 (314 aa).

Serine 29 bears the Phosphoserine; by KIN10 mark. A disordered region spans residues 94 to 177 (KPQDTSGRSD…SRRRKQAHLS (84 aa)). Residues 96–133 (QDTSGRSDNGGANESEQASLASSKATPMMSSAITSGSE) are compositionally biased toward polar residues. Residues 151-214 (NVKRVKRMLS…NDASVENRVL (64 aa)) form the bZIP domain. Positions 153–172 (KRVKRMLSNRESARRSRRRK) are basic motif. The Nuclear localization signal 1 signature appears at 155–162 (VKRMLSNR). The segment at 179–193 (LETQVSQLRVENSKL) is leucine-zipper. The tract at residues 253–274 (SLPSETSNSPDTTSSQVTTPEI) is disordered. A phosphoserine; by KIN10 mark is found at serine 294 and serine 300. A Nuclear localization signal 2 motif is present at residues 295–302 (MRRVESLE).

Belongs to the bZIP family. Homodimer. Forms a heterodimer with LSD1, BZIP1, BZIP2, BZIP9, BZIP10, BZIP11, BZIP25, BZIP44 and BZIP53. Interacts with KIN10 and SNF4. Component of a ternary complex composed of BZIP2-BZIP63 heterodimer and KIN10. Post-translationally, phosphorylated. The phosphorylation at Ser-29, Ser-294 and Ser-300 by KIN10 strongly enhances its ability to form homo- as well as heterodimers and are then essential for its transcriptional activity. As to expression, expressed in roots, shoots, young leaves, pollen, and flowers.

The protein localises to the nucleus. With respect to regulation, up-regulated by KIN10 under a phosphorylation-dependent manner. Functionally, transcription factor involved in controlling responses to starvation. BZIP2-BZIP63-KIN10 complex binds to the ETFQO promoter to up-regulate its transcription. The polypeptide is Basic leucine zipper 63 (BZIP63) (Arabidopsis thaliana (Mouse-ear cress)).